The following is a 96-amino-acid chain: UPF0251 protein Shal_3723 (96 aa).

It belongs to the UPF0251 family.

The polypeptide is UPF0251 protein Shal_3723 (Shewanella halifaxensis (strain HAW-EB4)).